A 777-amino-acid chain; its full sequence is Ethylene receptor 4 (777 aa).

The next 3 membrane-spanning stretches (helical) occupy residues 49-69 (LLIA…ATCA), 77-97 (AVLH…LAAF), and 113-133 (AAKV…LTFI). Cys88 and His92 together coordinate Cu cation. Residues 184–344 (DAHAILRTTA…VVADQAAVAL (161 aa)) enclose the GAF domain. Residues 387–521 (AMCHAMRRPV…NTGSGACRLS (135 aa)) form the Histidine kinase domain. A Phosphohistidine; by autocatalysis modification is found at His390. A Response regulatory domain is found at 645–774 (RVLLADDDAM…ALGAQLCRVL (130 aa)). Asp696 carries the post-translational modification 4-aspartylphosphate.

It belongs to the ethylene receptor family. The cofactor is Cu cation.

It is found in the endoplasmic reticulum membrane. It carries out the reaction ATP + protein L-histidine = ADP + protein N-phospho-L-histidine.. In terms of biological role, ethylene receptor related to bacterial two-component regulators. Acts as a redundant negative regulator of ethylene signaling. The protein is Ethylene receptor 4 (ETR4) of Oryza sativa subsp. japonica (Rice).